The sequence spans 369 residues: Protein VP6 (369 aa).

Disordered stretches follow at residues 17 to 169 (KREL…LQGR) and 184 to 208 (LDRI…GGDR). A compositionally biased stretch (basic and acidic residues) spans 29–68 (LREKGSTEAKSKLKEDGEKKNKSEKEENKIHDDRRVESQK). Gly residues predominate over residues 92-111 (TGGGDGSAGARTGIGGGGVG). Composition is skewed to basic and acidic residues over residues 137-148 (TGADRVANDDAT) and 196-208 (TEGE…GGDR).

The protein belongs to the orbivirus VP6 family.

It is found in the virion. This African horse sickness virus (AHSV) protein is Protein VP6 (Segment-9).